Reading from the N-terminus, the 712-residue chain is Probable GTP diphosphokinase RSH3, chloroplastic (712 aa).

The N-terminal 64 residues, 1 to 64 (MVVATTIALY…LLFSGASVKS (64 aa)), are a transit peptide targeting the chloroplast. Low complexity predominate over residues 65 to 74 (SSSSSSSHPS). The disordered stretch occupies residues 65–84 (SSSSSSSHPSVGEELASIRH). In terms of domain architecture, HD spans 237–338 (YLQHCVETAM…IKLADRLHNM (102 aa)).

Belongs to the RelA/SpoT family.

It localises to the plastid. Its subcellular location is the chloroplast. It carries out the reaction GTP + ATP = guanosine 3'-diphosphate 5'-triphosphate + AMP. Its function is as follows. Probable ppGpp (guanosine 3'-diphosphate 5'-diphosphate) synthetase that may be involved in a rapid plant ppGpp-mediated response to pathogens and other stresses. This chain is Probable GTP diphosphokinase RSH3, chloroplastic (RSH3), found in Arabidopsis thaliana (Mouse-ear cress).